The chain runs to 199 residues: Large ribosomal subunit protein bL25 (199 aa).

Belongs to the bacterial ribosomal protein bL25 family. CTC subfamily. In terms of assembly, part of the 50S ribosomal subunit; part of the 5S rRNA/L5/L18/L25 subcomplex. Contacts the 5S rRNA. Binds to the 5S rRNA independently of L5 and L18.

Functionally, this is one of the proteins that binds to the 5S RNA in the ribosome where it forms part of the central protuberance. This Pseudomonas fluorescens (strain ATCC BAA-477 / NRRL B-23932 / Pf-5) protein is Large ribosomal subunit protein bL25.